The sequence spans 258 residues: Regulatory protein RecX (258 aa).

It belongs to the RecX family.

It localises to the cytoplasm. In terms of biological role, modulates RecA activity. The protein is Regulatory protein RecX of Streptococcus pyogenes serotype M2 (strain MGAS10270).